Consider the following 189-residue polypeptide: Parkinson disease protein 7 homolog (189 aa).

Ala-2 carries the N-acetylalanine modification. S-palmitoyl cysteine attachment occurs at residues Cys-46 and Cys-53. Residue Tyr-67 is modified to Phosphotyrosine. The active-site Nucleophile is the Cys-106. Cys-106 is subject to Cysteine sulfinic acid (-SO2H); alternate. Cys-106 is lipidated: S-palmitoyl cysteine; alternate. His-126 is a catalytic residue. Lys-130 is covalently cross-linked (Glycyl lysine isopeptide (Lys-Gly) (interchain with G-Cter in SUMO)). Position 148 is an N6-acetyllysine (Lys-148). An N6-succinyllysine modification is found at Lys-182.

The protein belongs to the peptidase C56 family. In terms of assembly, homodimer. Binds EFCAB6/DJBP and PIAS2. Part of a ternary complex containing PARK7, EFCAB6/DJBP and AR. Interacts (via N-terminus) with OTUD7B. Interacts with BBS1, HIPK1, CLCF1 and MTERF. Forms a complex with PINK1 and PRKN. Interacts (via C-terminus) with NCF1; the interaction is enhanced by LPS and modulates NCF1 phosphorylation and membrane translocation. Interacts with NENF. Deglycase activity does not require glutathione as a cofactor, however, glycated glutathione constitutes a PARK7 substrate. is required as a cofactor. In terms of processing, sumoylated on Lys-130 by PIAS2 or PIAS4; which is essential for cell-growth promoting activity and transforming activity. Post-translationally, undergoes cleavage of a C-terminal peptide and subsequent activation of protease activity in response to oxidative stress. Ubiquitous. Detected on epididymal sperm. Highly expressed in testis and prostate. Detected at lower levels in heart, lung, brain, liver, kidney, seminal vesicle, caput and corpus epididymis.

The protein resides in the cell membrane. The protein localises to the cytoplasm. Its subcellular location is the membrane raft. It is found in the nucleus. It localises to the mitochondrion. The protein resides in the endoplasmic reticulum. It catalyses the reaction N(omega)-(1-hydroxy-2-oxopropyl)-L-arginyl-[protein] + H2O = lactate + L-arginyl-[protein] + H(+). The enzyme catalyses N(6)-(1-hydroxy-2-oxopropyl)-L-lysyl-[protein] + H2O = lactate + L-lysyl-[protein] + H(+). The catalysed reaction is S-(1-hydroxy-2-oxopropyl)-L-cysteinyl-[protein] + H2O = lactate + L-cysteinyl-[protein] + H(+). It carries out the reaction N(omega)-(1-hydroxy-2-oxoethyl)-L-arginyl-[protein] + H2O = L-arginyl-[protein] + glycolate + H(+). It catalyses the reaction N(6)-(1-hydroxy-2-oxoethyl)-L-lysyl-[protein] + H2O = glycolate + L-lysyl-[protein] + H(+). The enzyme catalyses S-(1-hydroxy-2-oxoethyl)-L-cysteinyl-[protein] + H2O = glycolate + L-cysteinyl-[protein] + H(+). The catalysed reaction is N(2)-(1-hydroxy-2-oxopropyl)-dGTP + H2O = lactate + dGTP + H(+). It carries out the reaction N(2)-(1-hydroxy-2-oxopropyl)-GTP + H2O = lactate + GTP + H(+). It catalyses the reaction N(2)-(1-hydroxy-2-oxopropyl)-GDP + H2O = lactate + GDP + H(+). The enzyme catalyses N(2)-(1-hydroxy-2-oxopropyl)-GMP + H2O = lactate + GMP + H(+). The catalysed reaction is N(2)-(1-hydroxy-2-oxoethyl)-dGTP + H2O = dGTP + glycolate + H(+). It carries out the reaction N(2)-(1-hydroxy-2-oxoethyl)-GTP + H2O = glycolate + GTP + H(+). It catalyses the reaction N(2)-(1-hydroxy-2-oxoethyl)-GDP + H2O = glycolate + GDP + H(+). The enzyme catalyses N(2)-(1-hydroxy-2-oxoethyl)-GMP + H2O = glycolate + GMP + H(+). The catalysed reaction is an N(2)-(1-hydroxy-2-oxopropyl)-guanosine in RNA + H2O = a guanosine in RNA + lactate + H(+). It carries out the reaction an N(2)-(1-hydroxy-2-oxopropyl)-2'-deoxyguanosine in DNA + H2O = a 2'-deoxyguanosine in DNA + lactate + H(+). It catalyses the reaction an N(2)-(1-hydroxy-2-oxoethyl)-guanosine in RNA + H2O = a guanosine in RNA + glycolate + H(+). The enzyme catalyses an N(2)-(1-hydroxy-2-oxoethyl)-2'-deoxyguanosine in DNA + H2O = a 2'-deoxyguanosine in DNA + glycolate + H(+). In terms of biological role, protein and nucleotide deglycase that catalyzes the deglycation of the Maillard adducts formed between amino groups of proteins or nucleotides and reactive carbonyl groups of glyoxals. Thus, functions as a protein deglycase that repairs methylglyoxal- and glyoxal-glycated proteins, and releases repaired proteins and lactate or glycolate, respectively. Deglycates cysteine, arginine and lysine residues in proteins, and thus reactivates these proteins by reversing glycation by glyoxals. Acts on early glycation intermediates (hemithioacetals and aminocarbinols), preventing the formation of advanced glycation endproducts (AGE) that cause irreversible damage. Also functions as a nucleotide deglycase able to repair glycated guanine in the free nucleotide pool (GTP, GDP, GMP, dGTP) and in DNA and RNA. Is thus involved in a major nucleotide repair system named guanine glycation repair (GG repair), dedicated to reversing methylglyoxal and glyoxal damage via nucleotide sanitization and direct nucleic acid repair. Also displays an apparent glyoxalase activity that in fact reflects its deglycase activity. Plays an important role in cell protection against oxidative stress and cell death acting as oxidative stress sensor and redox-sensitive chaperone and protease; functions probably related to its primary function. It is involved in neuroprotective mechanisms like the stabilization of NFE2L2 and PINK1 proteins, male fertility as a positive regulator of androgen signaling pathway as well as cell growth and transformation through, for instance, the modulation of NF-kappa-B signaling pathway. Eliminates hydrogen peroxide and protects cells against hydrogen peroxide-induced cell death. Required for correct mitochondrial morphology and function as well as for autophagy of dysfunctional mitochondria. Plays a role in regulating expression or stability of the mitochondrial uncoupling proteins SLC25A14 and SLC25A27 in dopaminergic neurons of the substantia nigra pars compacta and attenuates the oxidative stress induced by calcium entry into the neurons via L-type channels during pacemaking. Regulates astrocyte inflammatory responses, may modulate lipid rafts-dependent endocytosis in astrocytes and neuronal cells. In pancreatic islets, involved in the maintenance of mitochondrial reactive oxygen species (ROS) levels and glucose homeostasis in an age- and diet dependent manner. Protects pancreatic beta cells from cell death induced by inflammatory and cytotoxic setting. Binds to a number of mRNAs containing multiple copies of GG or CC motifs and partially inhibits their translation but dissociates following oxidative stress. Metal-binding protein able to bind copper as well as toxic mercury ions, enhances the cell protection mechanism against induced metal toxicity. In macrophages, interacts with the NADPH oxidase subunit NCF1 to direct NADPH oxidase-dependent ROS production, and protects against sepsis. This chain is Parkinson disease protein 7 homolog, found in Rattus norvegicus (Rat).